Here is a 399-residue protein sequence, read N- to C-terminus: V-set and immunoglobulin domain-containing protein 4 (399 aa).

A signal peptide spans 1-19 (MGILLGLLLLGHLTVDTYG). Residues 20–283 (RPILEVPESV…TSAGPGKSLP (264 aa)) lie on the Extracellular side of the membrane. Ig-like domains lie at 21-131 (PILE…DKIT) and 143-226 (PTVT…SDIV). Cystine bridges form between Cys-41–Cys-113 and Cys-165–Cys-211. Residues 284 to 304 (VFAIILIISLCCMVVFTMAYI) traverse the membrane as a helical segment. Residues 305–399 (MLCRKTSQQE…FLATEGKSVC (95 aa)) are Cytoplasmic-facing.

Abundantly expressed in several fetal tissues. In adult tissues, highest expression in lung and placenta. Expressed in resting macrophages.

Its subcellular location is the membrane. Phagocytic receptor, strong negative regulator of T-cell proliferation and IL2 production. Potent inhibitor of the alternative complement pathway convertases. The polypeptide is V-set and immunoglobulin domain-containing protein 4 (VSIG4) (Homo sapiens (Human)).